The chain runs to 704 residues: Elongation factor G (704 aa).

Residues 8 to 291 (DKVRNIGIMA…TVVECLPSPV (284 aa)) form the tr-type G domain. Residues 17 to 24 (AHIDAGKT), 90 to 94 (DTPGH), and 144 to 147 (NKMD) contribute to the GTP site.

This sequence belongs to the TRAFAC class translation factor GTPase superfamily. Classic translation factor GTPase family. EF-G/EF-2 subfamily.

It localises to the cytoplasm. In terms of biological role, catalyzes the GTP-dependent ribosomal translocation step during translation elongation. During this step, the ribosome changes from the pre-translocational (PRE) to the post-translocational (POST) state as the newly formed A-site-bound peptidyl-tRNA and P-site-bound deacylated tRNA move to the P and E sites, respectively. Catalyzes the coordinated movement of the two tRNA molecules, the mRNA and conformational changes in the ribosome. This chain is Elongation factor G, found in Prosthecochloris aestuarii (strain DSM 271 / SK 413).